Consider the following 321-residue polypeptide: MSSKKSLVQSLFNISKTYSRISGLTRMRPTKSGGIPPDAGDSGIRRRFLHKRAFFSPEIVPKGGNLMEKLRELTLSNNNRIRLDEMLPPPSPKKSSPEFFPAVTVEDVKKLMRAAEMELVKSKLREIGKNWVPYSEFVRVCGEYSSDPEQGNRVANMLDEAGNVIVLGKLVCLKPEELTSAMAGLIPTLEPSLDAETRQEFEQLEIIKSDIDKRADDLVRKELWAGLGLIMAQTVGFFRLTFWELSWDVMEPICFYVTSTYFMAGYAFFLRTSKEPSFEGFYKSRFETKQKRLIKMLDFDIDRFTKLQKMHRPNLTKSGRC.

The N-terminal 56 residues, 1-56, are a transit peptide targeting the chloroplast; it reads MSSKKSLVQSLFNISKTYSRISGLTRMRPTKSGGIPPDAGDSGIRRRFLHKRAFFS. Helical transmembrane passes span 223 to 243 and 249 to 269; these read LWAG…LTFW and VMEP…YAFF. Residues 247 to 255 carry the Selectivity filter motif; it reads WDVMEPICF. Position 251 (Glu-251) interacts with Ca(2+).

It belongs to the MCU (TC 1.A.77) family.

It is found in the plastid. The protein resides in the chloroplast membrane. It catalyses the reaction Ca(2+)(in) = Ca(2+)(out). Chloroplastic membrane calcium uniporter that mediates calcium uptake into chloroplast stroma. Constitutes a pore-forming and calcium-conducting subunit. Chloroplastic calcium homeostasis plays key roles in cellular physiology. Promotes calcium uptake into chloroplast stroma in response to osmotic-stress, fine-tuning cytosolic MAPK3/MAPK6 phosphorylation and affecting stomata opening. The polypeptide is Chloroplastic calcium uniporter protein (Arabidopsis thaliana (Mouse-ear cress)).